A 149-amino-acid polypeptide reads, in one-letter code: Deoxyuridine 5'-triphosphate nucleotidohydrolase (149 aa).

Substrate-binding positions include 68 to 70, asparagine 81, and 85 to 87; these read RSG and LID.

It belongs to the dUTPase family. The cofactor is Mg(2+).

It catalyses the reaction dUTP + H2O = dUMP + diphosphate + H(+). It participates in pyrimidine metabolism; dUMP biosynthesis; dUMP from dCTP (dUTP route): step 2/2. In terms of biological role, this enzyme is involved in nucleotide metabolism: it produces dUMP, the immediate precursor of thymidine nucleotides and it decreases the intracellular concentration of dUTP so that uracil cannot be incorporated into DNA. This chain is Deoxyuridine 5'-triphosphate nucleotidohydrolase, found in Laribacter hongkongensis (strain HLHK9).